The chain runs to 98 residues: Sm-like protein LSM8 (98 aa).

The 77-residue stretch at 2–78 (AATTGLETLV…IGVIGELDEE (77 aa)) folds into the Sm domain.

It belongs to the snRNP Sm proteins family. As to quaternary structure, component of the heptameric LSM2-LSM8 complex that forms a seven-membered ring structure with a donut shape. The LSM subunits are arranged in the order LSM8, LSM2, LSM3, LSM6, LSM5, LSM7 and LSM4. LSM8 subunit interacts only with its two neighboring subunits, LSM2 and LSM4. Interacts with the prefoldin co-chaperone subunits PFD1, PFD2, PFD3, PFD4, PFD5 and PFD6. As to expression, expressed in roots, leaves, stems, flowers and siliques.

The protein localises to the nucleus. Functionally, component of the nuclear LSM2-LSM8 complex which is involved splicing nuclear mRNAs. LSM2-LSM8 binds directly to the U6 small nuclear RNAs (snRNAs). LSM8 is essential for the formation of the nuclear LSM2-LSM8 complex involved in the accurate splicing of selected development-related mRNAs through the stabilization of the spliceosomal U6 snRNA. Plays a critical role in the regulation of development-related gene expression. This is Sm-like protein LSM8 from Arabidopsis thaliana (Mouse-ear cress).